An 817-amino-acid chain; its full sequence is Leucine--tRNA ligase (817 aa).

The 'HIGH' region signature appears at 42 to 52 (PYPSGKLHMGH). Positions 576–580 (KMSKS) match the 'KMSKS' region motif. Position 579 (lysine 579) interacts with ATP.

Belongs to the class-I aminoacyl-tRNA synthetase family.

The protein localises to the cytoplasm. It carries out the reaction tRNA(Leu) + L-leucine + ATP = L-leucyl-tRNA(Leu) + AMP + diphosphate. In Methylobacillus flagellatus (strain ATCC 51484 / DSM 6875 / VKM B-1610 / KT), this protein is Leucine--tRNA ligase.